The chain runs to 270 residues: Formamidopyrimidine-DNA glycosylase (270 aa).

The Schiff-base intermediate with DNA role is filled by Pro2. Residue Glu3 is the Proton donor of the active site. Lys58 (proton donor; for beta-elimination activity) is an active-site residue. 3 residues coordinate DNA: His91, Arg110, and Arg151. The FPG-type zinc-finger motif lies at 236–270 (RVYDREDAPCRRCATPIRRIVQAQRASFYCPTCQR). Arg260 functions as the Proton donor; for delta-elimination activity in the catalytic mechanism.

Belongs to the FPG family. In terms of assembly, monomer. Zn(2+) serves as cofactor.

It carries out the reaction Hydrolysis of DNA containing ring-opened 7-methylguanine residues, releasing 2,6-diamino-4-hydroxy-5-(N-methyl)formamidopyrimidine.. The enzyme catalyses 2'-deoxyribonucleotide-(2'-deoxyribose 5'-phosphate)-2'-deoxyribonucleotide-DNA = a 3'-end 2'-deoxyribonucleotide-(2,3-dehydro-2,3-deoxyribose 5'-phosphate)-DNA + a 5'-end 5'-phospho-2'-deoxyribonucleoside-DNA + H(+). Involved in base excision repair of DNA damaged by oxidation or by mutagenic agents. Acts as a DNA glycosylase that recognizes and removes damaged bases. Has a preference for oxidized purines, such as 7,8-dihydro-8-oxoguanine (8-oxoG). Has AP (apurinic/apyrimidinic) lyase activity and introduces nicks in the DNA strand. Cleaves the DNA backbone by beta-delta elimination to generate a single-strand break at the site of the removed base with both 3'- and 5'-phosphates. This chain is Formamidopyrimidine-DNA glycosylase, found in Thiobacillus denitrificans (strain ATCC 25259 / T1).